We begin with the raw amino-acid sequence, 307 residues long: Glutaminase 1 (307 aa).

Substrate-binding residues include Ser-62, Asn-114, Glu-159, Asn-166, Tyr-190, Tyr-242, and Val-260.

Belongs to the glutaminase family. As to quaternary structure, homotetramer.

The enzyme catalyses L-glutamine + H2O = L-glutamate + NH4(+). The polypeptide is Glutaminase 1 (Clostridium perfringens (strain 13 / Type A)).